Consider the following 216-residue polypeptide: Probable GTP-binding protein EngB (216 aa).

The region spanning 43-216 is the EngB-type G domain; the sequence is DRIEVCFAGR…TLRSIIAHLD (174 aa). GTP-binding positions include 51-58, 78-82, 96-99, 163-166, and 197-199; these read GRSNVGKS, GRTQE, DLPG, TKAD, and TSS. The Mg(2+) site is built by S58 and T80.

It belongs to the TRAFAC class TrmE-Era-EngA-EngB-Septin-like GTPase superfamily. EngB GTPase family. Mg(2+) serves as cofactor.

Functionally, necessary for normal cell division and for the maintenance of normal septation. This is Probable GTP-binding protein EngB from Ruegeria sp. (strain TM1040) (Silicibacter sp.).